Here is a 313-residue protein sequence, read N- to C-terminus: Ribosomal RNA small subunit methyltransferase H (313 aa).

Residues 36–38 (GGH), Asp-56, Phe-80, Asp-102, and Gln-109 contribute to the S-adenosyl-L-methionine site.

This sequence belongs to the methyltransferase superfamily. RsmH family.

The protein localises to the cytoplasm. It catalyses the reaction cytidine(1402) in 16S rRNA + S-adenosyl-L-methionine = N(4)-methylcytidine(1402) in 16S rRNA + S-adenosyl-L-homocysteine + H(+). Functionally, specifically methylates the N4 position of cytidine in position 1402 (C1402) of 16S rRNA. The chain is Ribosomal RNA small subunit methyltransferase H from Actinobacillus pleuropneumoniae serotype 7 (strain AP76).